A 462-amino-acid chain; its full sequence is Chromosomal replication initiator protein DnaA (462 aa).

A domain I, interacts with DnaA modulators region spans residues 1–84 (MAVSLWQQCI…RFDIGSRPSA (84 aa)). Positions 84–125 (ARTVQPAPAAPRPTTGHTQTKARVGTAFNIQAEPMANANHRS) are domain II. A domain III, AAA+ region region spans residues 126 to 342 (NINPTYQFDN…GALNRVIANA (217 aa)). ATP contacts are provided by glycine 170, glycine 172, lysine 173, and threonine 174. Residues 343 to 462 (NFTGRPITID…YANLIRTLSS (120 aa)) are domain IV, binds dsDNA.

Belongs to the DnaA family. Oligomerizes as a right-handed, spiral filament on DNA at oriC.

The protein resides in the cytoplasm. Plays an essential role in the initiation and regulation of chromosomal replication. ATP-DnaA binds to the origin of replication (oriC) to initiate formation of the DNA replication initiation complex once per cell cycle. Binds the DnaA box (a 9 base pair repeat at the origin) and separates the double-stranded (ds)DNA. Forms a right-handed helical filament on oriC DNA; dsDNA binds to the exterior of the filament while single-stranded (ss)DNA is stabiized in the filament's interior. The ATP-DnaA-oriC complex binds and stabilizes one strand of the AT-rich DNA unwinding element (DUE), permitting loading of DNA polymerase. After initiation quickly degrades to an ADP-DnaA complex that is not apt for DNA replication. Binds acidic phospholipids. This chain is Chromosomal replication initiator protein DnaA, found in Shewanella denitrificans (strain OS217 / ATCC BAA-1090 / DSM 15013).